The following is a 377-amino-acid chain: Mitogen-activated protein kinase HOG1 (377 aa).

The region spanning 23-305 (YTELNPVGMG…AVEGLTHPYM (283 aa)) is the Protein kinase domain. ATP-binding positions include 29–37 (VGMGAFGLV) and Lys-52. Asp-144 serves as the catalytic Proton acceptor. Thr-174 is subject to Phosphothreonine. The short motif at 174–176 (TGY) is the TXY element. Tyr-176 bears the Phosphotyrosine mark. Residues 354-377 (NETEGSEQPDSQVEQNNLDSANGA) are disordered. The span at 359–377 (SEQPDSQVEQNNLDSANGA) shows a compositional bias: polar residues.

This sequence belongs to the protein kinase superfamily. Ser/Thr protein kinase family. MAP kinase subfamily. HOG1 sub-subfamily. It depends on Mg(2+) as a cofactor. Post-translationally, dually phosphorylated on Thr-174 and Tyr-176, which activates the enzyme. Phosphorylated in response to oxidative and salt stress.

It localises to the cytoplasm. Its subcellular location is the nucleus. The catalysed reaction is L-seryl-[protein] + ATP = O-phospho-L-seryl-[protein] + ADP + H(+). It carries out the reaction L-threonyl-[protein] + ATP = O-phospho-L-threonyl-[protein] + ADP + H(+). Activated by tyrosine and threonine phosphorylation. Its function is as follows. Proline-directed serine/threonine-protein kinase involved in a signal transduction pathway that is activated by changes in the osmolarity of the extracellular environment. Controls osmotic regulation of transcription of target genes. Regulates stress-induced production and accumulation of glycerol and D-arabitol. HOG1 is also involved in virulence, morphogenesis and oxidative stress response especially through its role in chlamydospore formation, an oxygen-dependent morphogenetic program. The chain is Mitogen-activated protein kinase HOG1 (HOG1) from Candida albicans (strain SC5314 / ATCC MYA-2876) (Yeast).